The following is a 734-amino-acid chain: 5-methyltetrahydropteroyltriglutamate--homocysteine methyltransferase (734 aa).

5-methyltetrahydropteroyltri-L-glutamate contacts are provided by residues arginine 15–lysine 18 and lysine 104. L-homocysteine-binding positions include isoleucine 409–serine 411 and glutamate 462. L-methionine-binding positions include isoleucine 409–serine 411 and glutamate 462. 5-methyltetrahydropteroyltri-L-glutamate contacts are provided by residues arginine 493 to cysteine 494 and tryptophan 539. Aspartate 577 is a binding site for L-homocysteine. Residue aspartate 577 coordinates L-methionine. Glutamate 583 serves as a coordination point for 5-methyltetrahydropteroyltri-L-glutamate. 3 residues coordinate Zn(2+): histidine 618, cysteine 620, and glutamate 642. Residue histidine 672 is the Proton donor of the active site. Cysteine 704 contacts Zn(2+).

The protein belongs to the vitamin-B12 independent methionine synthase family. Zn(2+) serves as cofactor.

It carries out the reaction 5-methyltetrahydropteroyltri-L-glutamate + L-homocysteine = tetrahydropteroyltri-L-glutamate + L-methionine. The protein operates within amino-acid biosynthesis; L-methionine biosynthesis via de novo pathway; L-methionine from L-homocysteine (MetE route): step 1/1. Its function is as follows. Catalyzes the transfer of a methyl group from 5-methyltetrahydrofolate to homocysteine resulting in methionine formation. This is 5-methyltetrahydropteroyltriglutamate--homocysteine methyltransferase from Thermotoga maritima (strain ATCC 43589 / DSM 3109 / JCM 10099 / NBRC 100826 / MSB8).